The chain runs to 251 residues: Imidazole glycerol phosphate synthase subunit HisF (251 aa).

Active-site residues include Asp-11 and Asp-130.

This sequence belongs to the HisA/HisF family. As to quaternary structure, heterodimer of HisH and HisF.

It is found in the cytoplasm. It carries out the reaction 5-[(5-phospho-1-deoxy-D-ribulos-1-ylimino)methylamino]-1-(5-phospho-beta-D-ribosyl)imidazole-4-carboxamide + L-glutamine = D-erythro-1-(imidazol-4-yl)glycerol 3-phosphate + 5-amino-1-(5-phospho-beta-D-ribosyl)imidazole-4-carboxamide + L-glutamate + H(+). Its pathway is amino-acid biosynthesis; L-histidine biosynthesis; L-histidine from 5-phospho-alpha-D-ribose 1-diphosphate: step 5/9. Functionally, IGPS catalyzes the conversion of PRFAR and glutamine to IGP, AICAR and glutamate. The HisF subunit catalyzes the cyclization activity that produces IGP and AICAR from PRFAR using the ammonia provided by the HisH subunit. In Chlorobium luteolum (strain DSM 273 / BCRC 81028 / 2530) (Pelodictyon luteolum), this protein is Imidazole glycerol phosphate synthase subunit HisF.